Here is a 314-residue protein sequence, read N- to C-terminus: Protein OPG185 (314 aa).

An N-terminal signal peptide occupies residues 1–16 (MTRLPILLLLISLVYA). Residues 17 to 121 (TPFPQTSKKI…NDTDKVDYEE (105 aa)) form the Ig-like V-type domain. Residues 17-278 (TPFPQTSKKI…SNYKTKDFVE (262 aa)) are Virion surface-facing. An intrachain disulfide couples cysteine 34 to cysteine 103. Residues asparagine 37, asparagine 69, asparagine 112, and asparagine 161 are each glycosylated (N-linked (GlcNAc...) asparagine; by host). Residues 193–202 (NTVSASSGES) show a composition bias toward polar residues. The tract at residues 193–214 (NTVSASSGESTTDETPEPITDK) is disordered. Residue asparagine 253 is glycosylated (N-linked (GlcNAc...) asparagine; by host). The helical transmembrane segment at 279 to 302 (IFGITALIILSAVAIFCITYYIYN) threads the bilayer. The Intravirion segment spans residues 303-314 (KRSRKYKTENKV).

This sequence belongs to the orthopoxvirus OPG185 family. As to quaternary structure, heterodimerizes with OPG040. The heterodimer OPG185-OPG040 interacts with components of the entry fusion complex OPG143 and OPG094. Heterodimer with C3/VPC protein; disulfide-linked. Post-translationally, glycosylated; contains phosphate and sulfate-substituted glycans. O-glycosylation is required for hemagglutination and hemadsorption activities of infected cell membranes.

It is found in the virion membrane. It localises to the host membrane. Its function is as follows. Prevents cell to cell fusion by interacting with and directing the viral OPG040 protein on the host plasma membrane. The OPG185-OPG040 complex associates with components of the entry fusion complex (EFC) presumably to avoid superinfection and syncytium formation. Via its interaction with C3/VCP protein, protects the infected cell and probably also the extracellular enveloped virus from complement attack. The chain is Protein OPG185 (OPG185) from Bos taurus (Bovine).